The sequence spans 265 residues: Cell adhesion molecule CEACAM10 (265 aa).

The N-terminal stretch at 1–33 (MELASAHLHKGQVPWVGLLLTASLLTYWSPATT) is a signal peptide. 2 consecutive Ig-like V-type domains span residues 35 to 142 (QVTV…HVHP) and 155 to 262 (QVTV…NVHA). 3 N-linked (GlcNAc...) asparagine glycosylation sites follow: Asn-44, Asn-87, and Asn-224.

The protein belongs to the immunoglobulin superfamily. CEA family. As to expression, abundant in seminal vesicle and traces in epididymis and prostate (at protein level). Highly expressed in seminal vesicle, minor in colon and placenta and, to a lesser extent, in small intestine, caecum, stomach, salivary gland and bone marrow.

It is found in the secreted. The protein resides in the extracellular space. Functionally, may interact with other CEACAM proteins on the sperm surface. This Mus musculus (Mouse) protein is Cell adhesion molecule CEACAM10.